Here is a 463-residue protein sequence, read N- to C-terminus: Cysteine--tRNA ligase (463 aa).

A Zn(2+)-binding site is contributed by Cys-30. The 'HIGH' region motif lies at 32-42 (MTVYDYCHVGH). Zn(2+) contacts are provided by Cys-214, His-239, and Glu-243. A 'KMSKS' region motif is present at residues 271-275 (KMSKS). Residue Lys-274 coordinates ATP.

Belongs to the class-I aminoacyl-tRNA synthetase family. Monomer. Requires Zn(2+) as cofactor.

It is found in the cytoplasm. The enzyme catalyses tRNA(Cys) + L-cysteine + ATP = L-cysteinyl-tRNA(Cys) + AMP + diphosphate. This Ralstonia pickettii (strain 12J) protein is Cysteine--tRNA ligase.